Here is a 475-residue protein sequence, read N- to C-terminus: Bifunctional protein HldE (475 aa).

Residues 1 to 320 form a ribokinase region; the sequence is MNSSYLNFKD…AIMFQRSHNT (320 aa). An ATP-binding site is contributed by 196 to 199; sequence NLLE. Asp-265 is an active-site residue. Residues 346 to 475 form a cytidylyltransferase region; sequence FTNGCFDILH…TTSIIEKANL (130 aa).

It in the N-terminal section; belongs to the carbohydrate kinase PfkB family. This sequence in the C-terminal section; belongs to the cytidylyltransferase family. Homodimer.

It carries out the reaction D-glycero-beta-D-manno-heptose 7-phosphate + ATP = D-glycero-beta-D-manno-heptose 1,7-bisphosphate + ADP + H(+). It catalyses the reaction D-glycero-beta-D-manno-heptose 1-phosphate + ATP + H(+) = ADP-D-glycero-beta-D-manno-heptose + diphosphate. Its pathway is nucleotide-sugar biosynthesis; ADP-L-glycero-beta-D-manno-heptose biosynthesis; ADP-L-glycero-beta-D-manno-heptose from D-glycero-beta-D-manno-heptose 7-phosphate: step 1/4. The protein operates within nucleotide-sugar biosynthesis; ADP-L-glycero-beta-D-manno-heptose biosynthesis; ADP-L-glycero-beta-D-manno-heptose from D-glycero-beta-D-manno-heptose 7-phosphate: step 3/4. In terms of biological role, catalyzes the phosphorylation of D-glycero-D-manno-heptose 7-phosphate at the C-1 position to selectively form D-glycero-beta-D-manno-heptose-1,7-bisphosphate. Functionally, catalyzes the ADP transfer from ATP to D-glycero-beta-D-manno-heptose 1-phosphate, yielding ADP-D-glycero-beta-D-manno-heptose. The sequence is that of Bifunctional protein HldE from Marinomonas sp. (strain MWYL1).